A 704-amino-acid polypeptide reads, in one-letter code: UvrABC system protein C (704 aa).

A disordered region spans residues methionine 1–alanine 77. Residues valine 49–alanine 66 show a composition bias toward acidic residues. Residues glutamate 67 to alanine 77 show a composition bias toward low complexity. One can recognise a GIY-YIG domain in the interval threonine 92–valine 170. The UVR domain occupies arginine 280 to isoleucine 315.

This sequence belongs to the UvrC family. As to quaternary structure, interacts with UvrB in an incision complex.

Its subcellular location is the cytoplasm. The UvrABC repair system catalyzes the recognition and processing of DNA lesions. UvrC both incises the 5' and 3' sides of the lesion. The N-terminal half is responsible for the 3' incision and the C-terminal half is responsible for the 5' incision. The protein is UvrABC system protein C of Rhodopseudomonas palustris (strain ATCC BAA-98 / CGA009).